The chain runs to 932 residues: Lipoxygenase 2.2, chloroplastic (932 aa).

The PLAT domain occupies 79-219; sequence MKATVSVHMK…CSPDKRTFFP (141 aa). Positions 223–932 constitute a Lipoxygenase domain; that stretch reads SYIPSQTPKG…EMGIPNSISI (710 aa). The segment covering 270 to 284 has biased composition (basic and acidic residues); the sequence is PESKRPVLGGKEHPY. Residues 270–311 form a disordered region; sequence PESKRPVLGGKEHPYPRRCRTGRPRSKTDPSSEEESHKKGEM. Residues 285-294 show a composition bias toward basic residues; that stretch reads PRRCRTGRPR. The span at 295 to 311 shows a compositional bias: basic and acidic residues; the sequence is SKTDPSSEEESHKKGEM. His588, His593, His778, Asn782, and Ile932 together coordinate Fe cation.

Belongs to the lipoxygenase family. It depends on Fe cation as a cofactor.

The protein localises to the plastid. The protein resides in the chloroplast. It carries out the reaction (9Z,12Z)-octadecadienoate + O2 = (13S)-hydroperoxy-(9Z,11E)-octadecadienoate. It catalyses the reaction (9Z,12Z,15Z)-octadecatrienoate + O2 = (13S)-hydroperoxy-(9Z,11E,15Z)-octadecatrienoate. The protein operates within lipid metabolism; oxylipin biosynthesis. In terms of biological role, plant lipoxygenase may be involved in a number of diverse aspects of plant physiology including growth and development, pest resistance, and senescence or responses to wounding. This enzyme exhibits linoleate 13-lipoxygenase activity. The protein is Lipoxygenase 2.2, chloroplastic (LOX2.2) of Hordeum vulgare (Barley).